We begin with the raw amino-acid sequence, 335 residues long: Urokinase plasminogen activator surface receptor (335 aa).

Residues 1-22 (MGHPPLLPLLLLLHTCVPASWG) form the signal peptide. UPAR/Ly6 domains are found at residues 23 to 114 (LRCM…RSRY), 115 to 213 (LECI…PQNG), and 214 to 305 (RQCY…YRSG). 3 disulfide bridges follow: cysteine 25–cysteine 46, cysteine 28–cysteine 34, and cysteine 39–cysteine 67. The N-linked (GlcNAc...) asparagine glycan is linked to asparagine 74. 11 cysteine pairs are disulfide-bonded: cysteine 93–cysteine 98, cysteine 117–cysteine 144, cysteine 120–cysteine 127, cysteine 137–cysteine 169, cysteine 175–cysteine 192, cysteine 193–cysteine 198, cysteine 216–cysteine 244, cysteine 219–cysteine 227, cysteine 237–cysteine 263, cysteine 269–cysteine 287, and cysteine 288–cysteine 293. A glycan (N-linked (GlcNAc...) asparagine) is linked at asparagine 124. Residues asparagine 184, asparagine 194, asparagine 222, and asparagine 255 are each glycosylated (N-linked (GlcNAc...) asparagine). Glycine 305 carries the GPI-anchor amidated glycine lipid modification. Residues 306–335 (AAPQPGPAHLSLTITLLMTARLWGGTLLWT) constitute a propeptide, removed in mature form.

In terms of assembly, monomer. Interacts (via the UPAR/Ly6 domains) with SRPX2. Interacts with MRC2. Interacts with FAP (seprase); the interaction occurs at the cell surface of invadopodia membrane. Interacts with SORL1 (via N-terminal ectodomain); this interaction decreases PLAUR internalization. The ternary complex composed of PLAUR-PLAU-SERPINE1 also interacts with SORL1. Interacts with CD82; this interaction prevents PLAUR from binding to its high affinity ligand PLAU.

The protein localises to the cell membrane. Its subcellular location is the cell projection. The protein resides in the invadopodium membrane. Functionally, acts as a receptor for urokinase plasminogen activator. Plays a role in localizing and promoting plasmin formation. Mediates the proteolysis-independent signal transduction activation effects of U-PA. It is subject to negative-feedback regulation by U-PA which cleaves it into an inactive form. The protein is Urokinase plasminogen activator surface receptor (PLAUR) of Pan troglodytes (Chimpanzee).